The chain runs to 345 residues: Calcium uniporter regulatory subunit MCUb, mitochondrial (345 aa).

The transit peptide at 1-44 (MPGALSGRRMLPSGLCLGRWQLLRTIRARGRGDPRELPSTPQVL) directs the protein to the mitochondrion. Residues 188–221 (EIQKRRERHLMAKIDHLQEQLRPLEQVKAAIEAR) adopt a coiled-coil conformation. 2 helical membrane passes run 229–249 (LLWAGLALLSVQGGALAWLTW) and 259–279 (PVTFFLSFANSIVFFAYFIIT). The stretch at 306–334 (FDVEQYNKLKEDLAEATESLESVRRSLRL) forms a coiled coil.

Belongs to the MCU (TC 1.A.77) family. As to quaternary structure, homooligomer. Associates with the uniplex complex, composed of MCU, MICU1, MICU2 and EMRE/SMDT1, inhibiting its activity. Detected in lung, brain and heart, and at lower levels in white fat, skeletal muscle and spleen. Detected at very low levels in kidney and liver. Highly expressed in macrophages during the progression of skeletal muscle regeneration.

The protein resides in the mitochondrion inner membrane. Functionally, negative regulator of the mitochondrial calcium uniporter (MCU), a channel that mediates calcium uptake into the mitochondrial matrix. MCUB is required to limit mitochondrial calcium overload during stress. Acts as a dominant-negative regulator that displaces MCU from the functional uniplex complex and thereby decreases the association of calcium sensors MICU1 and MICU2, preventing channel gating. Mitochondrial calcium homeostasis plays key roles in mitochondrial metabolism. Acts as an important regulator of mitochondrial metabolism in response to stress in muscle cells: induced in response to fasting, leading to restrict mitochondrial calcium uptake, resulting in reprogramming of mitochondria toward fatty acid oxidation preference. Acts as a regulator of macrophage polarization during skeletal muscle regeneration: inhibition of mitochondrial calcium uptake drives differentiation of macrophages with anti-inflammatory profile, promoting the differentiation and fusion of satellite cells. The polypeptide is Calcium uniporter regulatory subunit MCUb, mitochondrial (Mus musculus (Mouse)).